The chain runs to 145 residues: 3-dehydroquinate dehydratase (145 aa).

Catalysis depends on Tyr24, which acts as the Proton acceptor. Substrate-binding residues include Asn76, His82, and Asp89. The Proton donor role is filled by His102. Substrate is bound by residues 103-104 and Arg113; that span reads VS.

The protein belongs to the type-II 3-dehydroquinase family. Homododecamer.

The catalysed reaction is 3-dehydroquinate = 3-dehydroshikimate + H2O. Its pathway is metabolic intermediate biosynthesis; chorismate biosynthesis; chorismate from D-erythrose 4-phosphate and phosphoenolpyruvate: step 3/7. Catalyzes a trans-dehydration via an enolate intermediate. The chain is 3-dehydroquinate dehydratase from Herminiimonas arsenicoxydans.